A 205-amino-acid chain; its full sequence is CASP-like protein 3A1 (205 aa).

Topologically, residues 1 to 39 (MGIGMDSSTMSGPLVAHSGILDGDYEKRPAVCKMQMRFD) are cytoplasmic. The helical transmembrane segment at 40–60 (LANVGLRVLSLACSLVALVSM) threads the bilayer. At 61-89 (ASNQESGVVTVFGFKLPVYSKWSYSDSFE) the chain is on the extracellular side. Residues 90–110 (FLVGASAAAAAHSLLQLLLCG) form a helical membrane-spanning segment. Residues 111–125 (MKMVKRASTIPSRNH) are Cytoplasmic-facing. Residues 126–146 (AWLLFAGDQVFAYGMLAAASA) form a helical membrane-spanning segment. Residues 147-176 (AAGVTNLNRTGFRHSDLPNFCKPLHRFCDK) lie on the Extracellular side of the membrane. Asn-154 carries N-linked (GlcNAc...) asparagine glycosylation. A helical membrane pass occupies residues 177-197 (AAISIVFAFISSLILGGSAVL). Residues 198-205 (DVFWLSKN) lie on the Cytoplasmic side of the membrane.

Belongs to the Casparian strip membrane proteins (CASP) family. Homodimer and heterodimers.

It is found in the cell membrane. The protein is CASP-like protein 3A1 of Picea sitchensis (Sitka spruce).